Consider the following 266-residue polypeptide: Adaptin ear-binding coat-associated protein 2 (266 aa).

Disordered stretches follow at residues serine 164–proline 191 and glycine 244–phenylalanine 266. Phosphoserine is present on serine 181. The WXXF motif 1 motif lies at tryptophan 243 to phenylalanine 246. The span at threonine 247–glutamine 258 shows a compositional bias: low complexity. The WXXF motif 2 motif lies at tryptophan 263–phenylalanine 266.

The protein belongs to the NECAP family. Interacts with AP1G1 and AP2A1 components of the adapter protein complexes AP-1 and AP-2. Interacts with the GAE domain proteins GGA1, GGA2 and GGA3.

It localises to the cytoplasmic vesicle. The protein resides in the clathrin-coated vesicle membrane. The protein localises to the cell membrane. Functionally, involved in endocytosis. This is Adaptin ear-binding coat-associated protein 2 (NECAP2) from Bos taurus (Bovine).